A 406-amino-acid polypeptide reads, in one-letter code: Imidazolonepropionase (406 aa).

Fe(3+) contacts are provided by histidine 72 and histidine 74. Residues histidine 72 and histidine 74 each contribute to the Zn(2+) site. 4-imidazolone-5-propanoate contacts are provided by arginine 81, tyrosine 144, and histidine 177. N-formimidoyl-L-glutamate is bound at residue tyrosine 144. Residue histidine 242 participates in Fe(3+) binding. Residue histidine 242 coordinates Zn(2+). Glutamine 245 provides a ligand contact to 4-imidazolone-5-propanoate. Aspartate 317 is a Fe(3+) binding site. Aspartate 317 is a Zn(2+) binding site. N-formimidoyl-L-glutamate contacts are provided by asparagine 319 and glycine 321. Residue threonine 322 coordinates 4-imidazolone-5-propanoate.

Belongs to the metallo-dependent hydrolases superfamily. HutI family. The cofactor is Zn(2+). Requires Fe(3+) as cofactor.

The protein localises to the cytoplasm. The catalysed reaction is 4-imidazolone-5-propanoate + H2O = N-formimidoyl-L-glutamate. Its pathway is amino-acid degradation; L-histidine degradation into L-glutamate; N-formimidoyl-L-glutamate from L-histidine: step 3/3. In terms of biological role, catalyzes the hydrolytic cleavage of the carbon-nitrogen bond in imidazolone-5-propanoate to yield N-formimidoyl-L-glutamate. It is the third step in the universal histidine degradation pathway. The chain is Imidazolonepropionase from Yersinia pseudotuberculosis serotype O:1b (strain IP 31758).